A 410-amino-acid polypeptide reads, in one-letter code: Cytochrome P450(BM-1) (410 aa).

Residue Cys356 participates in heme binding.

Belongs to the cytochrome P450 family. Heme serves as cofactor.

Its subcellular location is the cytoplasm. In terms of biological role, cytochromes P450 are a group of heme-thiolate monooxygenases. They oxidize a variety of structurally unrelated compounds, including steroids, fatty acids, and xenobiotics. The chain is Cytochrome P450(BM-1) (cyp106) from Priestia megaterium (strain ATCC 14581 / DSM 32 / CCUG 1817 / JCM 2506 / NBRC 15308 / NCIMB 9376 / NCTC 10342 / NRRL B-14308 / VKM B-512 / Ford 19) (Bacillus megaterium).